We begin with the raw amino-acid sequence, 154 residues long: Transcriptional repressor NrdR (154 aa).

A zinc finger lies at 3–34; that stretch reads CPFCTHPDTRVADSRLMEERNAVRRRRHCPNC. An ATP-cone domain is found at 49–139; it reads PAVIGPDKKR…LHKRFDNPAD (91 aa).

The protein belongs to the NrdR family. It depends on Zn(2+) as a cofactor.

Functionally, negatively regulates transcription of bacterial ribonucleotide reductase nrd genes and operons by binding to NrdR-boxes. The sequence is that of Transcriptional repressor NrdR from Neisseria meningitidis serogroup A / serotype 4A (strain DSM 15465 / Z2491).